The sequence spans 244 residues: ATP synthase subunit 4, mitochondrial (244 aa).

The transit peptide at Met1 to Tyr35 directs the protein to the mitochondrion. Ser144 is modified (phosphoserine).

The protein belongs to the eukaryotic ATPase B chain family. As to quaternary structure, F-type ATPases have 2 components, CF(1) - the catalytic core - and CF(0) - the membrane proton channel. In yeast, the dimeric form of ATP synthase consists of 17 polypeptides: alpha, beta, gamma, delta, epsilon, 4 (B), 5 (OSCP), 6 (A), 8, 9 (C), d, E (Tim11), f, g, h, i/j and k.

The protein localises to the mitochondrion. It localises to the mitochondrion inner membrane. Its function is as follows. Mitochondrial membrane ATP synthase (F(1)F(0) ATP synthase or Complex V) produces ATP from ADP in the presence of a proton gradient across the membrane which is generated by electron transport complexes of the respiratory chain. F-type ATPases consist of two structural domains, F(1) - containing the extramembraneous catalytic core, and F(0) - containing the membrane proton channel, linked together by a central stalk and a peripheral stalk. During catalysis, ATP synthesis in the catalytic domain of F(1) is coupled via a rotary mechanism of the central stalk subunits to proton translocation. Part of the complex F(0) domain and the peripheric stalk, which acts as a stator to hold the catalytic alpha(3)beta(3) subcomplex and subunit a/ATP6 static relative to the rotary elements. The protein is ATP synthase subunit 4, mitochondrial (ATP4) of Saccharomyces cerevisiae (strain ATCC 204508 / S288c) (Baker's yeast).